A 200-amino-acid chain; its full sequence is MTSNTPLPPCSILLLAGGRGQRMGGQDKGLVEWHGEPLIVHLHRKVRPLTDDLIISCNRNRERYAPFADRLVSDDEEDFPGPLAGIRAGLKAARHTHLLVLPCDVPRIDLALLHNMREAAGLNSEKPLMLRHDDHWEPLLCVIPVALLPAFENAWNAGERSPGRVMRNLDAQALVCPDNDPRLANLNTPELLSSHNTVSD.

GTP is bound by residues Leu15–Gly17, Lys28, Asp74, and Asp104. Asp104 contributes to the Mg(2+) binding site.

This sequence belongs to the MobA family. In terms of assembly, monomer. The cofactor is Mg(2+).

The protein localises to the cytoplasm. It carries out the reaction Mo-molybdopterin + GTP + H(+) = Mo-molybdopterin guanine dinucleotide + diphosphate. Transfers a GMP moiety from GTP to Mo-molybdopterin (Mo-MPT) cofactor (Moco or molybdenum cofactor) to form Mo-molybdopterin guanine dinucleotide (Mo-MGD) cofactor. The chain is Molybdenum cofactor guanylyltransferase from Pseudomonas fluorescens (strain Pf0-1).